The chain runs to 316 residues: Heme oxygenase 2 (316 aa).

The span at 1–12 (MSAEVETSEGVD) shows a compositional bias: acidic residues. The tract at residues 1–29 (MSAEVETSEGVDESEKKNSGALEKENQMR) is disordered. At Ser2 the chain carries N-acetylserine. Residue Ser2 is modified to Phosphoserine. A compositionally biased stretch (basic and acidic residues) spans 13 to 27 (ESEKKNSGALEKENQ). His45 provides a ligand contact to heme b. HRM repeat units lie at residues 264–269 (KCPFYA) and 281–286 (SCPFRT). Residues Cys265 and Cys282 each carry the S-nitrosocysteine modification.

The protein belongs to the heme oxygenase family. S-nitrosylated by BLVRB.

The protein localises to the microsome. Its subcellular location is the endoplasmic reticulum. It carries out the reaction heme b + 3 reduced [NADPH--hemoprotein reductase] + 3 O2 = biliverdin IXalpha + CO + Fe(2+) + 3 oxidized [NADPH--hemoprotein reductase] + 3 H2O + H(+). Its function is as follows. Heme oxygenase cleaves the heme ring at the alpha methene bridge to form biliverdin. Biliverdin is subsequently converted to bilirubin by biliverdin reductase. Under physiological conditions, the activity of heme oxygenase is highest in the spleen, where senescent erythrocytes are sequestrated and destroyed. Heme oxygenase 2 could be implicated in the production of carbon monoxide in brain where it could act as a neurotransmitter. This chain is Heme oxygenase 2 (HMOX2), found in Macaca fascicularis (Crab-eating macaque).